A 1488-amino-acid chain; its full sequence is Calmodulin binding protein PICBP (1488 aa).

4 disordered regions span residues 1 to 31 (MSNPMFPEKWEESSTSKSSRRVHKRRERKMW), 63 to 112 (TAES…SRIS), 280 to 329 (GPLG…GRSS), and 378 to 414 (HDHDDGKVDGTTSDGTVGDNEEVCREGSSGELREEDG). Residues 18 to 31 (SSRRVHKRRERKMW) are compositionally biased toward basic residues. The span at 76 to 86 (DDSRTYSKSSD) shows a compositional bias: basic and acidic residues. Over residues 98–107 (SVKRRAKSKS) the composition is skewed to basic residues. Acidic residues predominate over residues 297–312 (DNVDGDSDEEVFEEEV). Calmodulin-binding stretches follow at residues 493-592 (TFHM…SLIP) and 831-938 (NSLK…DIVL). 2 disordered regions span residues 816–844 (IPDSSSDEESVSESSNSLKEEKEHQGETK) and 941–971 (HDTPKQTKNSDTPRNNDETKEGKPRVEEGCE). Basic and acidic residues-rich tracts occupy residues 833 to 844 (LKEEKEHQGETK) and 954 to 971 (RNNDETKEGKPRVEEGCE). The tract at residues 1135–1229 (EKRVKGWNNV…SLLAQAFDTI (95 aa)) is calmodulin-binding. Disordered stretches follow at residues 1232–1252 (QDMGSGSTPGSAASSRNISRQ) and 1316–1340 (EKNQTLPEETRKEEEEEELKEDTSV). Low complexity predominate over residues 1235 to 1252 (GSGSTPGSAASSRNISRQ). The span at 1316–1328 (EKNQTLPEETRKE) shows a compositional bias: basic and acidic residues. Residues 1379 to 1483 (RQKSETLQVS…QLLVQAFESL (105 aa)) form a calmodulin-binding region.

Binds calmodulin in a calcium-dependent manner in vitro. May play a role in general plant defense including R gene-mediated responses. The polypeptide is Calmodulin binding protein PICBP (Arabidopsis thaliana (Mouse-ear cress)).